A 352-amino-acid chain; its full sequence is Light dependent period A (352 aa).

2 consecutive 4Fe-4S ferredoxin-type domains span residues 88–119 and 121–144; these read RRAW…STGV and RDRC…AQAW. Residues C97, C101, C105, C109, C124, C127, C130, and C134 each coordinate [4Fe-4S] cluster.

In terms of assembly, interacts with KaiA, CikA and SasA; the complexes do not follow circadian rhythms. It depends on [4Fe-4S] cluster as a cofactor.

Functions in an input pathway to the Kai circadian clock. Probably senses the metabolic state of the cell via plastoquinone levels and informs the clock to modulate the photoperiod length. Deletion decreases the ability of the bacteria to modulate the circadian period in response to altered light regimes. Mild overexpression increases the photoperiod. Rapidly degraded in the presence of the quinone analog DBMIB (2,5-dibromo-3-methyl-6-isopropyl-p-benzoquinone), an artifical electron acceptor for photosystem II that reduces the plastoquinone pool. Partially resonsible for sensitivity of CikA to DBMIB, influences the levels of KaiA. In Synechococcus elongatus (strain ATCC 33912 / PCC 7942 / FACHB-805) (Anacystis nidulans R2), this protein is Light dependent period A.